The following is a 214-amino-acid chain: Outer membrane lipoprotein MapA (214 aa).

Residues M1–A17 form the signal peptide. The N-palmitoyl cysteine moiety is linked to residue C18. C18 carries S-diacylglycerol cysteine lipidation.

It localises to the cell outer membrane. This Campylobacter jejuni subsp. jejuni serotype O:6 (strain 81116 / NCTC 11828) protein is Outer membrane lipoprotein MapA (mapA).